Here is a 416-residue protein sequence, read N- to C-terminus: Nuclear hormone receptor family member nhr-67 (416 aa).

The nuclear receptor DNA-binding region spans 18–98 (DVDCRVCEDH…IGMNKDAVQH (81 aa)). 2 NR C4-type zinc fingers span residues 21 to 41 (CRVCEDHSSGKHYSIFSCDGC) and 57 to 86 (CKNKGSPSEGQCKVDKTHRNQCRACRLRKC). Positions 331–398 (KTETEEGEDI…SSRPRHSIRS (68 aa)) are disordered. Positions 335 to 346 (EEGEDIEEEDDA) are enriched in acidic residues. The span at 377 to 390 (SSTQPSSASSPSSS) shows a compositional bias: low complexity.

It belongs to the nuclear hormone receptor family. As to expression, expressed in linker cell.

Its subcellular location is the nucleus. In terms of biological role, orphan nuclear receptor that binds DNA containing an extended core motif half-site sequence 5'-AAGTCA-3'. In males, plays an essential role in the migration of the linker cell which guides gonad elongation during the L3 and L4 stages of larval development by negatively regulating the expression of netrin receptor unc-5 at the mid-L3 stage. Involved in the regulation of non-apoptotic cell death in the linker cell, acting upstream of or in parallel to transcription factor hsf-1. Represses hypoxia response genes, fmo-2 and acs-2, in both normoxic and hypoxic conditions, probably acting via repression of nuclear receptor nhr-49. In Caenorhabditis elegans, this protein is Nuclear hormone receptor family member nhr-67 (nhr-67).